The chain runs to 206 residues: Holliday junction branch migration complex subunit RuvA (206 aa).

Positions 1-64 (MIGRLHGIII…EDAQLLYGFN (64 aa)) are domain I. Positions 65-143 (TRQERTLFRE…GWISHDLFTP (79 aa)) are domain II. Positions 144 to 157 (YTDAAPVDHEPSLA) are flexible linker. The tract at residues 158 to 206 (PADTVESEAVAALLALGYKPQQASLVVSKVIKPEMTVENVIREALRSML) is domain III.

Belongs to the RuvA family. In terms of assembly, homotetramer. Forms an RuvA(8)-RuvB(12)-Holliday junction (HJ) complex. HJ DNA is sandwiched between 2 RuvA tetramers; dsDNA enters through RuvA and exits via RuvB. An RuvB hexamer assembles on each DNA strand where it exits the tetramer. Each RuvB hexamer is contacted by two RuvA subunits (via domain III) on 2 adjacent RuvB subunits; this complex drives branch migration. In the full resolvosome a probable DNA-RuvA(4)-RuvB(12)-RuvC(2) complex forms which resolves the HJ.

The protein localises to the cytoplasm. Functionally, the RuvA-RuvB-RuvC complex processes Holliday junction (HJ) DNA during genetic recombination and DNA repair, while the RuvA-RuvB complex plays an important role in the rescue of blocked DNA replication forks via replication fork reversal (RFR). RuvA specifically binds to HJ cruciform DNA, conferring on it an open structure. The RuvB hexamer acts as an ATP-dependent pump, pulling dsDNA into and through the RuvAB complex. HJ branch migration allows RuvC to scan DNA until it finds its consensus sequence, where it cleaves and resolves the cruciform DNA. This chain is Holliday junction branch migration complex subunit RuvA, found in Tolumonas auensis (strain DSM 9187 / NBRC 110442 / TA 4).